The primary structure comprises 158 residues: NAD(P)H-quinone oxidoreductase subunit N (158 aa).

It belongs to the complex I NdhN subunit family. In terms of assembly, NDH-1 can be composed of about 15 different subunits; different subcomplexes with different compositions have been identified which probably have different functions.

The protein resides in the cellular thylakoid membrane. It carries out the reaction a plastoquinone + NADH + (n+1) H(+)(in) = a plastoquinol + NAD(+) + n H(+)(out). It catalyses the reaction a plastoquinone + NADPH + (n+1) H(+)(in) = a plastoquinol + NADP(+) + n H(+)(out). Functionally, NDH-1 shuttles electrons from an unknown electron donor, via FMN and iron-sulfur (Fe-S) centers, to quinones in the respiratory and/or the photosynthetic chain. The immediate electron acceptor for the enzyme in this species is believed to be plastoquinone. Couples the redox reaction to proton translocation, and thus conserves the redox energy in a proton gradient. Cyanobacterial NDH-1 also plays a role in inorganic carbon-concentration. The chain is NAD(P)H-quinone oxidoreductase subunit N from Cyanothece sp. (strain PCC 7425 / ATCC 29141).